Here is a 310-residue protein sequence, read N- to C-terminus: MAKVRTKDVMEQFNLELISGEEGINRPITMSDLSRPGIEIAGYFTYYPRERVQLLGKTELSFFEQLPEEEKKQRMDSLCTDVTPAIILSRDMPIPQELIDASEKNGVPVLRSPLKTTRLSSRLTNFLESRLAPTTAIHGVLVDIYGVGVLITGKSGVGKSETALELVKRGHRLVADDCVEIRQEDQDTLVGNAPELIEHLLEIRGLGIINVMTLFGAGAVRSNKRITIVMNLELWEQGKQYDRLGLEEETMKIIDTEITKLTIPVRPGRNLAVIIEVAAMNFRLKRMGLNAAEQFTNKLADVIEDGEQEE.

His138 lines the Mg(2+) pocket. 153–160 contributes to the ATP binding site; sequence GKSGVGKS. The active site involves Lys159. Residue Ser160 participates in Mg(2+) binding. Asp177 serves as the catalytic Proton acceptor; for phosphorylation activity. Proton donor; for dephosphorylation activity. Residues 201 to 210 form an important for the catalytic mechanism of both phosphorylation and dephosphorylation region; sequence LEIRGLGIIN. Glu202 is a binding site for Mg(2+). Arg243 is an active-site residue. An important for the catalytic mechanism of dephosphorylation region spans residues 264-269; it reads PVRPGR.

This sequence belongs to the HPrK/P family. In terms of assembly, homohexamer. The cofactor is Mg(2+). Requires Ca(2+) as cofactor.

The catalysed reaction is [HPr protein]-L-serine + ATP = [HPr protein]-O-phospho-L-serine + ADP + H(+). It carries out the reaction [HPr protein]-O-phospho-L-serine + phosphate + H(+) = [HPr protein]-L-serine + diphosphate. With respect to regulation, is active as a kinase only at high ATP concentrations or at low ATP concentrations in the presence of the allosteric activator fructose 1,6-bisphosphate (FBP). The pyrophosphate-dependent HPr phosphorylation is not stimulated by FBP. Kinase activity is inhibited by inorganic phosphate (Pi). Dephosphorylation of HPr(Ser-P) by B.subtilis HPrK/P becomes prevalent when the concentration of Pi increases. Thus, the kinase activity may prevail under conditions of good nutrient supply, whereas the phosphorylase activity is dominant if carbon and energy sources become limiting. Functionally, catalyzes the ATP- as well as the pyrophosphate-dependent phosphorylation of 'Ser-45' in HPr, a phosphocarrier protein of the phosphoenolpyruvate-dependent sugar phosphotransferase system (PTS). HprK/P also catalyzes the pyrophosphate-producing, inorganic phosphate-dependent dephosphorylation (phosphorolysis) of seryl-phosphorylated HPr (P-Ser-HPr). The two antagonistic activities of HprK/P are regulated by several intracellular metabolites, which change their concentration in response to the absence or presence of rapidly metabolisable carbon sources (glucose, fructose, etc.) in the growth medium. Also phosphorylates/dephosphorylates the HPr-like catabolite repression protein crh on 'Ser-46'. Therefore, by controlling the phosphorylation state of HPr and crh, HPrK/P is a sensor enzyme that plays a major role in the regulation of carbon metabolism and sugar transport: it mediates carbon catabolite repression (CCR), and regulates PTS-catalyzed carbohydrate uptake and inducer exclusion. The sequence is that of HPr kinase/phosphorylase (hprK) from Bacillus subtilis (strain 168).